Reading from the N-terminus, the 406-residue chain is 4-O-methyl-glucuronoyl methylesterase (406 aa).

The first 17 residues, 1–17, serve as a signal peptide directing secretion; it reads MAFRWLSFLLLALPVLA. An intrachain disulfide couples Cys-31 to Cys-64. 4 N-linked (GlcNAc...) asparagine glycosylation sites follow: Asn-100, Asn-110, Asn-122, and Asn-178. A GXSYXG catalytic site motif motif is present at residues 215-220; that stretch reads GCSRDG. 2 disulfides stabilise this stretch: Cys-216–Cys-352 and Cys-248–Cys-324. The active-site Nucleophile is the Ser-217. Substrate is bound by residues Lys-221, Gln-263, and Glu-271. N-linked (GlcNAc...) asparagine glycosylation occurs at Asn-285. Residue Trp-315 participates in substrate binding. Asn-348 carries an N-linked (GlcNAc...) asparagine glycan. His-351 (proton donor/acceptor) is an active-site residue. Asn-376, Asn-387, and Asn-398 each carry an N-linked (GlcNAc...) asparagine glycan.

Belongs to the carbohydrate esterase 15 (CE15) family.

Its subcellular location is the secreted. It carries out the reaction a 4-O-methyl-alpha-D-glucuronosyl ester derivative + H2O = 4-O-methyl-alpha-D-glucuronate derivative + an alcohol + H(+). Its function is as follows. Glucuronoyl esterase which may play a significant role in biomass degradation, as it is considered to disconnect hemicellulose from lignin through the hydrolysis of the ester bond between 4-O-methyl-D-glucuronic acid residues of glucuronoxylans and aromatic alcohols of lignin. This Phanerochaete carnosa (strain HHB-10118-sp) (White-rot fungus) protein is 4-O-methyl-glucuronoyl methylesterase.